A 197-amino-acid polypeptide reads, in one-letter code: Probable thymidylate kinase (197 aa).

ATP is bound at residue 7–14 (GLDGSGKT).

The protein belongs to the thymidylate kinase family.

It carries out the reaction dTMP + ATP = dTDP + ADP. In Halorubrum lacusprofundi (strain ATCC 49239 / DSM 5036 / JCM 8891 / ACAM 34), this protein is Probable thymidylate kinase.